A 127-amino-acid polypeptide reads, in one-letter code: Large ribosomal subunit protein bL20 (127 aa).

This sequence belongs to the bacterial ribosomal protein bL20 family.

In terms of biological role, binds directly to 23S ribosomal RNA and is necessary for the in vitro assembly process of the 50S ribosomal subunit. It is not involved in the protein synthesizing functions of that subunit. The chain is Large ribosomal subunit protein bL20 from Bifidobacterium longum (strain DJO10A).